The following is a 735-amino-acid chain: Catalase-peroxidase (735 aa).

The segment at residues 95 to 223 is a cross-link (tryptophyl-tyrosyl-methioninium (Trp-Tyr) (with M-249)); it reads WHSAGTYRTG…LAAVQMGLIY (129 aa). H96 acts as the Proton acceptor in catalysis. The tryptophyl-tyrosyl-methioninium (Tyr-Met) (with W-95) cross-link spans 223–249; it reads YVNPEGPDGVPDPIKSGIDIRETFARM. Heme b is bound at residue H264.

The protein belongs to the peroxidase family. Peroxidase/catalase subfamily. In terms of assembly, homodimer or homotetramer. Heme b is required as a cofactor. Post-translationally, formation of the three residue Trp-Tyr-Met cross-link is important for the catalase, but not the peroxidase activity of the enzyme.

It carries out the reaction H2O2 + AH2 = A + 2 H2O. The catalysed reaction is 2 H2O2 = O2 + 2 H2O. Functionally, bifunctional enzyme with both catalase and broad-spectrum peroxidase activity. The chain is Catalase-peroxidase from Aliarcobacter butzleri (strain RM4018) (Arcobacter butzleri).